Here is a 901-residue protein sequence, read N- to C-terminus: Protein translocase subunit SecA (901 aa).

ATP-binding positions include Q87, 105 to 109 (GEGKT), and D512. 4 residues coordinate Zn(2+): C885, C887, C896, and H897.

This sequence belongs to the SecA family. In terms of assembly, monomer and homodimer. Part of the essential Sec protein translocation apparatus which comprises SecA, SecYEG and auxiliary proteins SecDF-YajC and YidC. The cofactor is Zn(2+).

Its subcellular location is the cell inner membrane. The protein resides in the cytoplasm. The enzyme catalyses ATP + H2O + cellular proteinSide 1 = ADP + phosphate + cellular proteinSide 2.. In terms of biological role, part of the Sec protein translocase complex. Interacts with the SecYEG preprotein conducting channel. Has a central role in coupling the hydrolysis of ATP to the transfer of proteins into and across the cell membrane, serving both as a receptor for the preprotein-SecB complex and as an ATP-driven molecular motor driving the stepwise translocation of polypeptide chains across the membrane. This chain is Protein translocase subunit SecA, found in Salmonella agona (strain SL483).